The chain runs to 560 residues: ATP synthase subunit beta, mitochondrial (560 aa).

Residues 1–54 constitute a mitochondrion transit peptide; that stretch reads MASRRLLASLLRQSAQRGGGLISRSLGNSIPKSASRASSRASPKGFLLNRAVQY. Disordered stretches follow at residues 20-44 and 58-81; these read GLIS…ASPK and AAAP…KITD. Low complexity-rich tracts occupy residues 33 to 42 and 58 to 71; these read SASRASSRAS and AAAP…PPKS. Residue 235 to 242 participates in ATP binding; sequence GGAGVGKT.

It belongs to the ATPase alpha/beta chains family. As to quaternary structure, F-type ATPases have 2 components, CF(1) - the catalytic core - and CF(0) - the membrane proton channel. CF(1) has five subunits: alpha(3), beta(3), gamma(1), delta(1), epsilon(1). CF(0) has three main subunits: a, b and c.

It is found in the mitochondrion. Its subcellular location is the mitochondrion inner membrane. The enzyme catalyses ATP + H2O + 4 H(+)(in) = ADP + phosphate + 5 H(+)(out). Functionally, mitochondrial membrane ATP synthase (F(1)F(0) ATP synthase or Complex V) produces ATP from ADP in the presence of a proton gradient across the membrane which is generated by electron transport complexes of the respiratory chain. F-type ATPases consist of two structural domains, F(1) - containing the extramembraneous catalytic core, and F(0) - containing the membrane proton channel, linked together by a central stalk and a peripheral stalk. During catalysis, ATP synthesis in the catalytic domain of F(1) is coupled via a rotary mechanism of the central stalk subunits to proton translocation. Subunits alpha and beta form the catalytic core in F(1). Rotation of the central stalk against the surrounding alpha(3)beta(3) subunits leads to hydrolysis of ATP in three separate catalytic sites on the beta subunits. The polypeptide is ATP synthase subunit beta, mitochondrial (ATPB) (Nicotiana plumbaginifolia (Leadwort-leaved tobacco)).